A 486-amino-acid polypeptide reads, in one-letter code: GDP-Man:Man(3)GlcNAc(2)-PP-Dol alpha-1,2-mannosyltransferase (486 aa).

Residues 1–16 (MAGPMCLCGMMRLLTA) are Lumenal-facing. The helical transmembrane segment at 17–37 (LFIPVLITSVGLCLIFVLLFI) threads the bilayer. The Cytoplasmic portion of the chain corresponds to 38–229 (CTRLWVQRKK…SNNPVLSRLK (192 aa)). Residues 230 to 250 (LIYYYLFALFYGWVGSCSDVI) constitute an intramembrane region (helical). Residues 251–393 (MVNSTWTFSH…IGLHTMWNEH (143 aa)) lie on the Cytoplasmic side of the membrane. The helical intramembrane region spans 394-414 (FGIGIVECMAAGTIILAHNSG). Topologically, residues 415 to 486 (GPKLDIVVPH…FLASSEPLFK (72 aa)) are cytoplasmic.

This sequence belongs to the glycosyltransferase group 1 family. Glycosyltransferase 4 subfamily.

Its subcellular location is the endoplasmic reticulum membrane. The catalysed reaction is an alpha-D-Man-(1-&gt;3)-[alpha-D-Man-(1-&gt;6)]-beta-D-Man-(1-&gt;4)-beta-D-GlcNAc-(1-&gt;4)-alpha-D-GlcNAc-diphospho-di-trans,poly-cis-dolichol + 2 GDP-alpha-D-mannose = an alpha-D-Man-(1-&gt;2)-alpha-D-Man-(1-&gt;2)-alpha-D-Man-(1-&gt;3)-[alpha-D-Man-(1-&gt;6)]-beta-D-Man-(1-&gt;4)-beta-D-GlcNAc-(1-&gt;4)-alpha-D-GlcNAc-diphospho-di-trans,poly-cis-dolichol + 2 GDP + 2 H(+). The protein operates within protein modification; protein glycosylation. In terms of biological role, GDP-Man:Man(3)GlcNAc(2)-PP-Dol alpha-1,2-mannosyltransferase that operates in the biosynthetic pathway of dolichol-linked oligosaccharides, the glycan precursors employed in protein asparagine (N)-glycosylation. The assembly of dolichol-linked oligosaccharides begins on the cytosolic side of the endoplasmic reticulum membrane and finishes in its lumen. The sequential addition of sugars to dolichol pyrophosphate produces dolichol-linked oligosaccharides containing fourteen sugars, including two GlcNAcs, nine mannoses and three glucoses. Once assembled, the oligosaccharide is transferred from the lipid to nascent proteins by oligosaccharyltransferases. Catalyzes, on the cytoplasmic face of the endoplasmic reticulum, the addition of the fourth and fifth mannose residues to the dolichol-linked oligosaccharide chain, to produce Man(5)GlcNAc(2)-PP-dolichol core oligosaccharide. Man(5)GlcNAc(2)-PP-dolichol is a substrate for ALG3, the following enzyme in the biosynthetic pathway. The chain is GDP-Man:Man(3)GlcNAc(2)-PP-Dol alpha-1,2-mannosyltransferase (alg11) from Xenopus laevis (African clawed frog).